A 215-amino-acid chain; its full sequence is Eukaryotic translation initiation factor 4E (215 aa).

Positions 1–27 (MAERDSEPRVNIIRPDDEPEVEEERVP) are disordered. Ser207 is modified (phosphoserine; by PKC).

Belongs to the eukaryotic initiation factor 4E family. EIF4F is a multi-subunit complex, the composition of which varies with external and internal environmental conditions. It is composed of at least eIF4A, eIF4E and eIF4G. eIF4E is also known to interact with other partners. Phosphorylation increases the ability of the protein to bind to mRNA caps and to form the eIF4F complex.

Its function is as follows. Recognizes and binds the 7-methylguanosine-containing mRNA cap during an early step in the initiation of protein synthesis and facilitates ribosome binding by inducing the unwinding of the mRNAs secondary structures. In Aplysia californica (California sea hare), this protein is Eukaryotic translation initiation factor 4E.